Consider the following 874-residue polypeptide: Protein translocase subunit SecA (874 aa).

ATP contacts are provided by residues Q85, 103-107, and D492; that span reads GEGKT. Basic and acidic residues predominate over residues 839–854; it reads EEGPKKPYRREQKIGR. A disordered region spans residues 839 to 864; sequence EEGPKKPYRREQKIGRNDPCPCGSGK. 4 residues coordinate Zn(2+): C858, C860, C869, and C870.

The protein belongs to the SecA family. As to quaternary structure, monomer and homodimer. Part of the essential Sec protein translocation apparatus which comprises SecA, SecYEG and auxiliary proteins SecDF. Other proteins may also be involved. It depends on Zn(2+) as a cofactor.

The protein resides in the cell membrane. Its subcellular location is the cytoplasm. It carries out the reaction ATP + H2O + cellular proteinSide 1 = ADP + phosphate + cellular proteinSide 2.. Its function is as follows. Part of the Sec protein translocase complex. Interacts with the SecYEG preprotein conducting channel. Has a central role in coupling the hydrolysis of ATP to the transfer of proteins into and across the cell membrane, serving as an ATP-driven molecular motor driving the stepwise translocation of polypeptide chains across the membrane. This chain is Protein translocase subunit SecA, found in Carboxydothermus hydrogenoformans (strain ATCC BAA-161 / DSM 6008 / Z-2901).